A 395-amino-acid polypeptide reads, in one-letter code: LIM/homeobox protein Lhx3 (395 aa).

LIM zinc-binding domains are found at residues 28-78 (CAGC…CKDD) and 87-141 (CAAC…CKAD). The homeobox DNA-binding region spans 154–213 (AKRPRTTITAKQLETLKNAYNNSPKPARHVREQLSSETGLDMRVVQVWFQNRRAKEKRLK). Disordered stretches follow at residues 208–304 (KEKR…QDQY) and 363–383 (GPSSDLSTGSSGGYPDFPVSP). Positions 257–278 (DEPSMSEMNHSNGIYNSLNDSS) are enriched in polar residues.

As to quaternary structure, interacts with ldb1 and with the N-terminus of rnf12. As to expression, in dorsal regions at neural tube and tailbud stages and in adults predominantly in the pituitary gland and weakly in the eye and brain.

The protein localises to the nucleus. Functionally, transcription factor. May be involved in the specification and maintenance of differentiation of distinct neuronal and neuroendocrine tissues. Early marker for the pituitary and pineal lineages, it may be involved in specifying these lineages. In Xenopus laevis (African clawed frog), this protein is LIM/homeobox protein Lhx3 (lhx3).